Consider the following 466-residue polypeptide: Cytochrome b561 and DOMON domain-containing protein At3g59070 (466 aa).

A signal peptide spans 1–25 (MSLSSRATLVVLCCLFMLIPSFTTA). A DOMON domain is found at 57–172 (LNSYLHFNYA…TVVNHLWQDG (116 aa)). The region spanning 179 to 380 (RLGMHAMSGD…MEILQFKKRW (202 aa)) is the Cytochrome b561 domain. A run of 3 helical transmembrane segments spans residues 219–239 (IHAIVNALSWGILMPIGVMAA), 252–272 (WFYIHVVCQTTGYFSGLIGGL), and 287–307 (TLHTVIGLLLFALGFLQILSL). Heme b contacts are provided by histidine 220, histidine 256, histidine 289, and histidine 325. Transmembrane regions (helical) follow at residues 327–347 (TMGYIVIVLSIYNIYKGLSIL) and 355–375 (IAYTTIICCIAAFAVVMEILQ).

Heme b serves as cofactor.

Its subcellular location is the membrane. Functionally, may act as a catecholamine-responsive trans-membrane electron transporter. In Arabidopsis thaliana (Mouse-ear cress), this protein is Cytochrome b561 and DOMON domain-containing protein At3g59070.